Reading from the N-terminus, the 474-residue chain is C6 finger domain transcription factor aclZ (474 aa).

Positions 42 to 69 form a DNA-binding region, zn(2)-C6 fungal-type; that stretch reads CNQCHAAKVRCSGERTGCDRCNNLQYQC. 2 disordered regions span residues 85–148 and 177–206; these read RGNK…SHSA and MSSDQDPSRSRGHSLQAPSHSGHSIADSHT. Residues 90–105 are compositionally biased toward polar residues; the sequence is VRTTTEALQRPATAST. Positions 117 to 138 are enriched in basic and acidic residues; sequence TDQRSENDPLSRSDFGEQDAAH.

It is found in the nucleus. Functionally, transcription factor that specifically regulates the gene cluster that mediates the biosynthesis of aspirochlorine (or antibiotic A30641), an unusual halogenated spiro compound with distinctive antifungal properties due to selective inhibition of protein biosynthesis, and which is also active against bacteria, viruses, and murine tumor cells. In Aspergillus oryzae (strain ATCC 42149 / RIB 40) (Yellow koji mold), this protein is C6 finger domain transcription factor aclZ.